A 434-amino-acid polypeptide reads, in one-letter code: Phosphomethylpyrimidine synthase (434 aa).

Substrate is bound by residues asparagine 74, methionine 103, tyrosine 132, histidine 171, 193–195, 234–237, and glutamate 273; these read SRG and DGIR. Residue histidine 277 coordinates Zn(2+). Tyrosine 300 lines the substrate pocket. Histidine 341 lines the Zn(2+) pocket. [4Fe-4S] cluster contacts are provided by cysteine 417, cysteine 420, and cysteine 424.

Belongs to the ThiC family. Homodimer. [4Fe-4S] cluster serves as cofactor.

It carries out the reaction 5-amino-1-(5-phospho-beta-D-ribosyl)imidazole + S-adenosyl-L-methionine = 4-amino-2-methyl-5-(phosphooxymethyl)pyrimidine + CO + 5'-deoxyadenosine + formate + L-methionine + 3 H(+). It functions in the pathway cofactor biosynthesis; thiamine diphosphate biosynthesis. Catalyzes the synthesis of the hydroxymethylpyrimidine phosphate (HMP-P) moiety of thiamine from aminoimidazole ribotide (AIR) in a radical S-adenosyl-L-methionine (SAM)-dependent reaction. In Desulfotalea psychrophila (strain LSv54 / DSM 12343), this protein is Phosphomethylpyrimidine synthase.